Here is a 134-residue protein sequence, read N- to C-terminus: Large ribosomal subunit protein bL20 (134 aa).

This sequence belongs to the bacterial ribosomal protein bL20 family.

Binds directly to 23S ribosomal RNA and is necessary for the in vitro assembly process of the 50S ribosomal subunit. It is not involved in the protein synthesizing functions of that subunit. The sequence is that of Large ribosomal subunit protein bL20 from Rhizobium etli (strain ATCC 51251 / DSM 11541 / JCM 21823 / NBRC 15573 / CFN 42).